The following is a 412-amino-acid chain: Probable cystathionine gamma-synthase 2 (412 aa).

Residues Y76, R78, G106, M107, Y131, S226, and T228 each coordinate pyridoxal 5'-phosphate. At K229 the chain carries N6-(pyridoxal phosphate)lysine.

This sequence belongs to the trans-sulfuration enzymes family. Pyridoxal 5'-phosphate is required as a cofactor.

The catalysed reaction is O-phospho-L-homoserine + L-cysteine = L,L-cystathionine + phosphate. It catalyses the reaction O-succinyl-L-homoserine + L-cysteine = L,L-cystathionine + succinate + H(+). The protein operates within amino-acid biosynthesis; L-methionine biosynthesis via de novo pathway; L-cystathionine from O-succinyl-L-homoserine: step 1/1. Its function is as follows. Catalyzes the first committed step of methionine (Met) biosynthesis. Catalyzes the formation of L-cystathionine from homoserine esters and L-cysteine, via a gamma-replacement reaction. In Arabidopsis thaliana (Mouse-ear cress), this protein is Probable cystathionine gamma-synthase 2.